Here is a 170-residue protein sequence, read N- to C-terminus: Small ribosomal subunit protein bS16 (170 aa).

Positions 109–170 (ALAEAEGGPS…AAESEAPAAE (62 aa)) are disordered. Over residues 131–150 (AKKDEQPTEKAAEPAAEKAA) the composition is skewed to basic and acidic residues. Positions 151–170 (EPAAEAPAEAAAESEAPAAE) are enriched in low complexity.

The protein belongs to the bacterial ribosomal protein bS16 family.

The sequence is that of Small ribosomal subunit protein bS16 from Mycolicibacterium gilvum (strain PYR-GCK) (Mycobacterium gilvum (strain PYR-GCK)).